The chain runs to 714 residues: Fumarate reductase flavoprotein subunit (714 aa).

FAD-binding positions include 13 to 16 (GGLA), 42 to 44 (SHS), and 49 to 50 (GG). Residue histidine 43 is modified to Tele-8alpha-FAD histidine. Active-site residues include histidine 257 and arginine 273. Residues glutamate 420 and 436–437 (SV) each bind FAD.

It belongs to the FAD-dependent oxidoreductase 2 family. FRD/SDH subfamily. Part of an enzyme complex containing three subunits: a flavoprotein (frdA), an iron-sulfur protein (frdB), and diheme cytochrome b (frdC). Requires FAD as cofactor.

The protein localises to the cell inner membrane. The catalysed reaction is a quinone + succinate = fumarate + a quinol. In terms of biological role, the fumarate reductase enzyme complex is required for fumarate respiration. In Helicobacter pylori (strain ATCC 700392 / 26695) (Campylobacter pylori), this protein is Fumarate reductase flavoprotein subunit (frdA).